Here is a 522-residue protein sequence, read N- to C-terminus: Glucans biosynthesis protein G (522 aa).

Positions 1–33 (MLDNKFGFKQRVASLRWLSAAIMLSVSAVPAWA) are cleaved as a signal peptide.

It belongs to the OpgD/OpgG family.

It is found in the periplasm. The protein operates within glycan metabolism; osmoregulated periplasmic glucan (OPG) biosynthesis. Functionally, involved in the biosynthesis of osmoregulated periplasmic glucans (OPGs). The chain is Glucans biosynthesis protein G from Pectobacterium atrosepticum (strain SCRI 1043 / ATCC BAA-672) (Erwinia carotovora subsp. atroseptica).